The sequence spans 464 residues: tRNA-2-methylthio-N(6)-dimethylallyladenosine synthase (464 aa).

The MTTase N-terminal domain occupies glycine 19 to leucine 135. [4Fe-4S] cluster is bound by residues cysteine 28, cysteine 64, cysteine 98, cysteine 170, cysteine 174, and cysteine 177. The region spanning arginine 156–lysine 393 is the Radical SAM core domain. The region spanning glutamine 396–lysine 464 is the TRAM domain.

Belongs to the methylthiotransferase family. MiaB subfamily. Monomer. Requires [4Fe-4S] cluster as cofactor.

The protein localises to the cytoplasm. It catalyses the reaction N(6)-dimethylallyladenosine(37) in tRNA + (sulfur carrier)-SH + AH2 + 2 S-adenosyl-L-methionine = 2-methylsulfanyl-N(6)-dimethylallyladenosine(37) in tRNA + (sulfur carrier)-H + 5'-deoxyadenosine + L-methionine + A + S-adenosyl-L-homocysteine + 2 H(+). In terms of biological role, catalyzes the methylthiolation of N6-(dimethylallyl)adenosine (i(6)A), leading to the formation of 2-methylthio-N6-(dimethylallyl)adenosine (ms(2)i(6)A) at position 37 in tRNAs that read codons beginning with uridine. The protein is tRNA-2-methylthio-N(6)-dimethylallyladenosine synthase of Prochlorococcus marinus subsp. pastoris (strain CCMP1986 / NIES-2087 / MED4).